Consider the following 460-residue polypeptide: Adenosylhomocysteinase (460 aa).

Substrate is bound by residues Thr-83, Asp-158, and Glu-184. NAD(+) is bound at residue 185–187; that stretch reads TTT. 2 residues coordinate substrate: Lys-214 and Asp-218. NAD(+)-binding positions include Asn-219, 248–253, Glu-271, 327–329, and Asn-373; these read GYGDVG and IGH.

This sequence belongs to the adenosylhomocysteinase family. It depends on NAD(+) as a cofactor.

The protein localises to the cytoplasm. It carries out the reaction S-adenosyl-L-homocysteine + H2O = L-homocysteine + adenosine. Its pathway is amino-acid biosynthesis; L-homocysteine biosynthesis; L-homocysteine from S-adenosyl-L-homocysteine: step 1/1. Functionally, may play a key role in the regulation of the intracellular concentration of adenosylhomocysteine. The polypeptide is Adenosylhomocysteinase (Bdellovibrio bacteriovorus (strain ATCC 15356 / DSM 50701 / NCIMB 9529 / HD100)).